The primary structure comprises 499 residues: DAZ protein 1 (499 aa).

Residues 1 to 29 form a disordered region; that stretch reads MMSPPLRYQKDQQNQQHQQNQSQQAAHQM. Residues 12–28 are compositionally biased toward low complexity; it reads QQNQQHQQNQSQQAAHQ. Residues 66–144 enclose the RRM domain; the sequence is PNRIFVGGFP…SRKLNLGPAI (79 aa). Over residues 195-224 the composition is skewed to low complexity; sequence FVYPPLRSQDQSRQQSEQQTTPQNSPTNLQ. 2 disordered regions span residues 195 to 304 and 406 to 499; these read FVYP…NNGG and YPGN…TKNN. Residues 214 to 236 form the DAZ domain; sequence TTPQNSPTNLQHQQSPQVFFGGD. Residues 251–262 show a composition bias toward basic and acidic residues; sequence EKSEVSPEKHES. Residues 263 to 279 are compositionally biased toward polar residues; the sequence is VSPQPLLPNQNVLNTQY. Positions 280–304 are enriched in low complexity; the sequence is SQGQQQWNSNVQQQQQQQMDSNNGG. The span at 406–425 shows a compositional bias: polar residues; sequence YPGNFSQQHTMGNNENTFSL. The segment covering 438-447 has biased composition (basic and acidic residues); that stretch reads KPSECQDKKT. Residues 480–499 are compositionally biased toward low complexity; the sequence is LSPLSASLQSLAISSPTKNN.

This sequence belongs to the RRM DAZ family. As to expression, germline specific. More strongly expressed during oogenesis than during spermatogenesis. During the larval stages, it is more abundant at the distal region than the proximal region of the gonad. In young adult hermaphrodites, it is expressed at a very low level in the distal mitotic region of the gonad, and begins to accumulate in the meiotic transition zone. Highly expressed in the proximal pachytene region. Not expressed in mature oocytes. Not expressed in the spermatheca. Weakly or not expressed in the germline of adult males.

Its function is as follows. RNA-binding protein that plays a central role in oogenesis, but not for spermatogenesis. Required for meiotic entry and germline differentiation, at the pachytene stage of meiosis I of female germline regardless of the sex of the soma. May act by regulating translation of specific mRNAs, possibly by binding to their 3'-UTR. This is DAZ protein 1 (daz-1) from Caenorhabditis elegans.